The chain runs to 450 residues: Adenylosuccinate lyase (450 aa).

N(6)-(1,2-dicarboxyethyl)-AMP-binding positions include 9–10 (RY), 75–77 (HHD), and 101–102 (TS). Catalysis depends on His-149, which acts as the Proton donor/acceptor. N(6)-(1,2-dicarboxyethyl)-AMP is bound at residue Gln-223. Ser-273 (proton donor/acceptor) is an active-site residue. Residues Ser-274, 279–281 (KRN), and 318–322 (SVERV) contribute to the N(6)-(1,2-dicarboxyethyl)-AMP site.

This sequence belongs to the lyase 1 family. Adenylosuccinate lyase subfamily. In terms of assembly, homotetramer. Residues from neighboring subunits contribute catalytic and substrate-binding residues to each active site.

It catalyses the reaction N(6)-(1,2-dicarboxyethyl)-AMP = fumarate + AMP. It carries out the reaction (2S)-2-[5-amino-1-(5-phospho-beta-D-ribosyl)imidazole-4-carboxamido]succinate = 5-amino-1-(5-phospho-beta-D-ribosyl)imidazole-4-carboxamide + fumarate. Its pathway is purine metabolism; AMP biosynthesis via de novo pathway; AMP from IMP: step 2/2. It participates in purine metabolism; IMP biosynthesis via de novo pathway; 5-amino-1-(5-phospho-D-ribosyl)imidazole-4-carboxamide from 5-amino-1-(5-phospho-D-ribosyl)imidazole-4-carboxylate: step 2/2. Functionally, catalyzes two reactions in de novo purine nucleotide biosynthesis. Catalyzes the breakdown of 5-aminoimidazole- (N-succinylocarboxamide) ribotide (SAICAR or 2-[5-amino-1-(5-phospho-beta-D-ribosyl)imidazole-4-carboxamido]succinate) to 5-aminoimidazole-4-carboxamide ribotide (AICAR or 5-amino-1-(5-phospho-beta-D-ribosyl)imidazole-4-carboxamide) and fumarate, and of adenylosuccinate (ADS or N(6)-(1,2-dicarboxyethyl)-AMP) to adenosine monophosphate (AMP) and fumarate. The polypeptide is Adenylosuccinate lyase (purB) (Pyrococcus horikoshii (strain ATCC 700860 / DSM 12428 / JCM 9974 / NBRC 100139 / OT-3)).